We begin with the raw amino-acid sequence, 357 residues long: MASLTDLVNLDLSDCTDRIIAEYIWIGGTGIDLRSKARTVKGPITDPIQLPKWNYDGSSTGQAPGEDSEVILYPQAIFKDPFRKGNHILVMCDCYTPQGEPIPTNKRYSAAKVFSHPDVAAEVPWYGIEQEYTLLQKDVSWPLGWPVGGYPGPQGPYYCAAGADKAFGRDVVDAHYKACLYAGINISGINGEVMPGQWEFQVGPSVGISAGDEIWVARYILERITEMAGIVLSLDPKPIKGDWNGAGAHTNYSTKSMREAGGYEVIKAAIDKLGKRHKEHIAAYGEGNERRLTGRHETADINTFKWGVANRGASIRVGRDTEREGKGYFEDRRPASNMDPYVVTGMIAETTILWNGN.

The region spanning Ile19 to Gly99 is the GS beta-grasp domain. One can recognise a GS catalytic domain in the interval Lys106 to Asn357.

It belongs to the glutamine synthetase family. In terms of assembly, homooctamer. In terms of tissue distribution, found mainly in the cortical tissues of seedling roots, and in the root tip.

It localises to the cytoplasm. The catalysed reaction is L-glutamate + NH4(+) + ATP = L-glutamine + ADP + phosphate + H(+). Plays a role in the flow of nitrogen into nitrogenous organic compounds. The polypeptide is Glutamine synthetase root isozyme 1 (GLN6) (Zea mays (Maize)).